Reading from the N-terminus, the 153-residue chain is Ribonuclease H (153 aa).

The 142-residue stretch at 1-142 (MTPEVVIYTD…ADALARKGLS (142 aa)) folds into the RNase H type-1 domain. Positions 10, 48, 70, and 134 each coordinate Mg(2+).

The protein belongs to the RNase H family. In terms of assembly, monomer. Requires Mg(2+) as cofactor.

The protein localises to the cytoplasm. It carries out the reaction Endonucleolytic cleavage to 5'-phosphomonoester.. Functionally, endonuclease that specifically degrades the RNA of RNA-DNA hybrids. The polypeptide is Ribonuclease H (Phenylobacterium zucineum (strain HLK1)).